A 77-amino-acid polypeptide reads, in one-letter code: DNA-directed RNA polymerase subunit omega (77 aa).

Belongs to the RNA polymerase subunit omega family. The RNAP catalytic core consists of 2 alpha, 1 beta, 1 beta' and 1 omega subunit. When a sigma factor is associated with the core the holoenzyme is formed, which can initiate transcription.

The enzyme catalyses RNA(n) + a ribonucleoside 5'-triphosphate = RNA(n+1) + diphosphate. Its function is as follows. Promotes RNA polymerase assembly. Latches the N- and C-terminal regions of the beta' subunit thereby facilitating its interaction with the beta and alpha subunits. In Nitratidesulfovibrio vulgaris (strain ATCC 29579 / DSM 644 / CCUG 34227 / NCIMB 8303 / VKM B-1760 / Hildenborough) (Desulfovibrio vulgaris), this protein is DNA-directed RNA polymerase subunit omega.